Consider the following 332-residue polypeptide: Aquaporin Lacbi1:317173 (332 aa).

The segment covering 1-20 has biased composition (polar residues); sequence MSGQHQITEQSSRNPLSRVS. Residues 1-45 are disordered; sequence MSGQHQITEQSSRNPLSRVSTLLPEKPLSPTSTYAGTQKHPEAPR. At 1–66 the chain is on the cytoplasmic side; the sequence is MSGQHQITEQ…RNAIRKPMAE (66 aa). Residues 67–87 form a helical membrane-spanning segment; sequence FFGVALLIIFGAGSACQVVLS. The Extracellular segment spans residues 88–100; the sequence is TNPDVASSARGSF. The helical transmembrane segment at 101–121 threads the bilayer; that stretch reads LSINFGWAIGIAMGVWVSGGI. The Cytoplasmic portion of the chain corresponds to 122 to 144; that stretch reads SGGHINPAITIAMATYRGFPWRK. Positions 127–129 match the NPA 1 motif; it reads NPA. A helical membrane pass occupies residues 145 to 165; sequence VPSYILAQVLGGVVGAGLVYA. The Extracellular segment spans residues 166 to 199; sequence NYIHAIDIFEGGHHIRTQATASLFATYALPYMTQ. The helical transmembrane segment at 200–220 threads the bilayer; sequence ASCFFSEFLATAVLSMMVFAL. Over 221 to 230 the chain is Cytoplasmic; sequence TDKRNHSPTN. Residues 231–251 form a helical membrane-spanning segment; it reads GLLPFALFILFVGLGASLGME. The Extracellular segment spans residues 252 to 283; sequence TAYALNPARDFGPRLFLAMAGYGKALFNYRSQ. The NPA 2 motif lies at 257 to 259; sequence NPA. Residues 284–304 traverse the membrane as a helical segment; the sequence is YWLWAPIIAPVLGAQAGGLLY. Topologically, residues 305 to 332 are cytoplasmic; sequence DTFLNDGDNSPIKWRCASSQEHQLAEVV.

This sequence belongs to the MIP/aquaporin (TC 1.A.8) family.

Its subcellular location is the membrane. The catalysed reaction is H2O(in) = H2O(out). It catalyses the reaction NH4(+)(in) = NH4(+)(out). In terms of biological role, water channel required to facilitate the transport of water across membranes. Acts as the most efficient Laccaria water channel. In addition to water, also shows strong ammonium transport activity. May be involved in fungal nitrogen (ammonium) support of the plant host in symbiosis. In Laccaria bicolor (strain S238N-H82 / ATCC MYA-4686) (Bicoloured deceiver), this protein is Aquaporin Lacbi1:317173.